The primary structure comprises 761 residues: uncharacterized protein (761 aa).

A CR-type zinc finger spans residues 1–84 (MIVKCPICDG…CGGSGKVVKC (84 aa)). The S1 motif domain occupies 135–200 (GKFYKGVVTR…EKREIDFKYI (66 aa)).

This is an uncharacterized protein from Methanocaldococcus jannaschii (strain ATCC 43067 / DSM 2661 / JAL-1 / JCM 10045 / NBRC 100440) (Methanococcus jannaschii).